Consider the following 345-residue polypeptide: Nicotinate-nucleotide--dimethylbenzimidazole phosphoribosyltransferase (345 aa).

The Proton acceptor role is filled by Glu312.

It belongs to the CobT family.

The enzyme catalyses 5,6-dimethylbenzimidazole + nicotinate beta-D-ribonucleotide = alpha-ribazole 5'-phosphate + nicotinate + H(+). The protein operates within nucleoside biosynthesis; alpha-ribazole biosynthesis; alpha-ribazole from 5,6-dimethylbenzimidazole: step 1/2. Its function is as follows. Catalyzes the synthesis of alpha-ribazole-5'-phosphate from nicotinate mononucleotide (NAMN) and 5,6-dimethylbenzimidazole (DMB). The sequence is that of Nicotinate-nucleotide--dimethylbenzimidazole phosphoribosyltransferase from Phocaeicola vulgatus (strain ATCC 8482 / DSM 1447 / JCM 5826 / CCUG 4940 / NBRC 14291 / NCTC 11154) (Bacteroides vulgatus).